An 83-amino-acid chain; its full sequence is Small ribosomal subunit protein uS17 (83 aa).

The protein belongs to the universal ribosomal protein uS17 family. Part of the 30S ribosomal subunit.

Functionally, one of the primary rRNA binding proteins, it binds specifically to the 5'-end of 16S ribosomal RNA. This chain is Small ribosomal subunit protein uS17, found in Campylobacter jejuni subsp. jejuni serotype O:6 (strain 81116 / NCTC 11828).